Here is a 397-residue protein sequence, read N- to C-terminus: Lysophospholipid transporter LplT (397 aa).

Over 1–17 the chain is Periplasmic; sequence MSESVHTNTSLWSKGMK. A helical membrane pass occupies residues 18-38; it reads AVIVAQFLSAFGDNALLFATL. Over 39–52 the chain is Cytoplasmic; the sequence is ALLKAQFYPEWSQP. Residues 53–73 traverse the membrane as a helical segment; sequence ILQMVFVGAYILFAPFVGQVA. At 74–90 the chain is on the periplasmic side; the sequence is DSFAKGRVMMFANGLKL. Residues 91–111 traverse the membrane as a helical segment; the sequence is LGAASICFGINPFLGYTLVGV. At 112–144 the chain is on the cytoplasmic side; sequence GAAAYSPAKYGILGELTTGSKLVKANGLMEAST. The helical transmembrane segment at 145 to 165 threads the bilayer; sequence IAAILLGSVAGGVLADWHVLV. Alanine 166 is a topological domain (periplasmic). Residues 167–187 traverse the membrane as a helical segment; sequence LAACALAYGGAVVANIYIPKL. Residues 188-226 lie on the Cytoplasmic side of the membrane; it reads AAARPGQSWNLINMTRSFLNACTSLWRNGETRFSLVGTS. The helical transmembrane segment at 227–247 threads the bilayer; the sequence is LFWGAGVTLRFLLVLWVPVAL. The Periplasmic portion of the chain corresponds to 248 to 256; sequence GITDNSTPT. Residues 257-277 traverse the membrane as a helical segment; it reads YLNAMVAIGIVVGAGAAAKLV. The Cytoplasmic portion of the chain corresponds to 278 to 280; the sequence is TLE. Residues 281–301 traverse the membrane as a helical segment; it reads TVSRCMPAGILIGVVVLIFSL. Over 302-304 the chain is Periplasmic; it reads QHE. Residues 305–325 form a helical membrane-spanning segment; it reads LLPAYALLMLIGVMGGFFVVP. Topologically, residues 326-343 are cytoplasmic; it reads LNALLQERGKKSVGAGNA. The chain crosses the membrane as a helical span at residues 344–364; that stretch reads IAVQNLGENSAMLLMLGIYSL. The Periplasmic segment spans residues 365–366; the sequence is AV. Residues 367–387 traverse the membrane as a helical segment; it reads MVGIPVVPIGIGFGALFALAI. Residues 388 to 397 are Cytoplasmic-facing; it reads TALWIWQRRH.

Belongs to the major facilitator superfamily. LplT (TC 2.A.1.42) family.

It is found in the cell inner membrane. In terms of biological role, catalyzes the facilitated diffusion of 2-acyl-glycero-3-phosphoethanolamine (2-acyl-GPE) into the cell. The sequence is that of Lysophospholipid transporter LplT from Shigella boydii serotype 4 (strain Sb227).